We begin with the raw amino-acid sequence, 756 residues long: Polyribonucleotide nucleotidyltransferase (756 aa).

Mg(2+) is bound by residues aspartate 532 and aspartate 538. The region spanning 598-657 (PRVTAIKVPVDKIGEVIGPKGKMINSITEQTGANISIEDDGTVFVGATDGPSAQAAIDMI) is the KH domain. Residues 669–738 (GERFLGTVVK…ARGKISLIPV (70 aa)) enclose the S1 motif domain.

Belongs to the polyribonucleotide nucleotidyltransferase family. The cofactor is Mg(2+).

It localises to the cytoplasm. It catalyses the reaction RNA(n+1) + phosphate = RNA(n) + a ribonucleoside 5'-diphosphate. Functionally, involved in mRNA degradation. Catalyzes the phosphorolysis of single-stranded polyribonucleotides processively in the 3'- to 5'-direction. The sequence is that of Polyribonucleotide nucleotidyltransferase from Rhodococcus erythropolis (strain PR4 / NBRC 100887).